Consider the following 599-residue polypeptide: Crinkler effector protein 8 (599 aa).

The signal sequence occupies residues 1-17 (MVTLFCAVVGVAGSTFP). Positions 18–52 (VDINENKSVGHLKKAIKEEKMYQFPADELQLFLAK) are LQLFLAK domain. Asn23 carries N-linked (GlcNAc...) asparagine glycosylation. The tract at residues 53–109 (AGGNAWLSSLTEDVKKLKKGEKTALVKSLTQEEKELQGEDPISECLEGMDPPKVKQI) is DWL domain. The HVLVXXP motif signature appears at 110–116 (HVLVALP). The tract at residues 117-590 (PGTSSAPISD…EAAEQESQGK (474 aa)) is C-terminal D2 effector domain. Phosphoserine is present on residues Ser249, Ser281, and Ser385. The region spanning 289–590 (LSKKLVWSYG…EAAEQESQGK (302 aa)) is the Protein kinase domain. The active-site Proton acceptor is Asp470. A phosphoserine mark is found at Ser474 and Ser587. Residues 577–599 (RFEREAAEQESQGKGVRKKHRRA) form a disordered region. Residues 590 to 599 (KGVRKKHRRA) carry the Host nuclear localization signal motif.

It in the N-terminal section; belongs to the Crinkler effector family. This sequence in the C-terminal section; belongs to the protein kinase superfamily. In terms of assembly, dimerizes in host plants. In terms of processing, autophosphorylated at Ser-249, Ser-281, Ser-385, Ser-474 and Ser-587. Additional serines or threonines are also targeted for phosphorylation.

It is found in the secreted. It localises to the host nucleus. It carries out the reaction L-seryl-[protein] + ATP = O-phospho-L-seryl-[protein] + ADP + H(+). The enzyme catalyses L-threonyl-[protein] + ATP = O-phospho-L-threonyl-[protein] + ADP + H(+). Secreted effector that induces cell death when expressed in host plants. Acts as a kinase and is able to autophosphorylate, however its cell death inducing ability is not a direct result of its kinase activity, but rather a consequence of the phosphorylated state of the five identified serine residues in the CRN8 protein. In Phytophthora infestans (Potato late blight agent), this protein is Crinkler effector protein 8.